The sequence spans 470 residues: Trigger factor (470 aa).

Positions 164–243 (GDYVVIDMTA…VTAVKVQELP (80 aa)) constitute a PPIase FKBP-type domain. Acidic residues-rich tracts occupy residues 424-438 (ETDA…ESVE) and 445-470 (AEDD…AAKA). The interval 424-470 (ETDAEDAAEGVESVEVDLSAAAEDDAEETSDEPAAEDTATEDEAAKA) is disordered.

The protein belongs to the FKBP-type PPIase family. Tig subfamily.

It is found in the cytoplasm. It catalyses the reaction [protein]-peptidylproline (omega=180) = [protein]-peptidylproline (omega=0). Involved in protein export. Acts as a chaperone by maintaining the newly synthesized protein in an open conformation. Functions as a peptidyl-prolyl cis-trans isomerase. This Beutenbergia cavernae (strain ATCC BAA-8 / DSM 12333 / CCUG 43141 / JCM 11478 / NBRC 16432 / NCIMB 13614 / HKI 0122) protein is Trigger factor.